We begin with the raw amino-acid sequence, 328 residues long: L-arabinose transport system permease protein AraH (328 aa).

10 helical membrane-spanning segments follow: residues valine 29 to isoleucine 49, glycine 53 to alanine 73, leucine 79 to threonine 99, isoleucine 104 to isoleucine 124, isoleucine 129 to isoleucine 149, phenylalanine 171 to leucine 191, threonine 220 to alanine 240, methionine 249 to leucine 269, isoleucine 276 to leucine 296, and asparagine 297 to phenylalanine 317.

This sequence belongs to the binding-protein-dependent transport system permease family. AraH/RbsC subfamily.

It is found in the cell inner membrane. Its function is as follows. Part of the binding-protein-dependent transport system for L-arabinose. Probably responsible for the translocation of the substrate across the membrane. The polypeptide is L-arabinose transport system permease protein AraH (araH) (Escherichia coli (strain K12)).